A 685-amino-acid chain; its full sequence is Heat shock protein homolog SSE1 (685 aa).

Residues 651–685 form a disordered region; that stretch reads QALRSNQEASKMADLSAKLAAQRKAEAEAKENAKE. Basic and acidic residues predominate over residues 673-685; the sequence is RKAEAEAKENAKE.

The protein belongs to the heat shock protein 70 family.

Its subcellular location is the cytoplasm. The polypeptide is Heat shock protein homolog SSE1 (SSE1) (Naumovozyma castellii (Yeast)).